Here is a 398-residue protein sequence, read N- to C-terminus: Fe-regulated protein 8 (398 aa).

Protein of unknown function; part of the gene cluster that mediates the biosynthesis of siderophore ferrichrome A which is contributing to organismal virulence. In Mycosarcoma maydis (Corn smut fungus), this protein is Fe-regulated protein 8.